The primary structure comprises 1291 residues: GRB10-interacting GYF protein 2 (1291 aa).

Ala2 is modified (N-acetylalanine). Ser19, Ser26, and Ser30 each carry phosphoserine. Omega-N-methylarginine is present on residues Arg107, Arg119, and Arg121. The segment at 112–132 is disordered; sequence GTVVGAPRGRSSSRGRGRGRG. Ser140 carries the phosphoserine modification. Disordered regions lie at residues 148–196, 209–248, and 267–484; these read FGRG…RKHE, REEQNGEDEDGGWRLAGSRRDGERWRPHSPDGPRSTGWRE, and RGYR…TEPD. Arg150 bears the Omega-N-methylarginine mark. Residues 152-183 are compositionally biased toward basic and acidic residues; it reads GGREMHRSQSWEERGDRRFEKPGRKDVGRPNF. Residues Ser161, Ser190, and Ser237 each carry the phosphoserine modification. Over residues 226–248 the composition is skewed to basic and acidic residues; it reads SRRDGERWRPHSPDGPRSTGWRE. The DDX6 binding motif signature appears at 281-311; it reads DDRDSLPEWCLEDAEEEMGTFDSSGAFLSLK. A compositionally biased stretch (acidic residues) spans 290–299; it reads CLEDAEEEMG. Positions 313–364 are enriched in basic and acidic residues; it reads VQKEPIPEEQEMDFRPVEEGEERSDSDSSHNEEAKEPDKTNRREGEKTDRAG. The span at 371 to 393 shows a compositional bias: polar residues; sequence VPQTSLSSARPGTPSDHQPQEAT. Thr383 carries the post-translational modification Phosphothreonine. Residues 394–415 show a composition bias toward basic and acidic residues; the sequence is QFERKDEPKAEQVEKAEEENRS. Residues 534-582 enclose the GYF domain; the sequence is MQKWYYKDPQGEIQGPFNNQEMAEWFQAGYFTMSLLVKRACDESFQPLG. A required for GRB10-binding region spans residues 548–564; it reads GPFNNQEMAEWFQAGYF. Phosphoserine is present on Ser594. Disordered stretches follow at residues 732 to 794, 846 to 937, 958 to 998, 1011 to 1053, and 1090 to 1118; these read KAKA…QEEA, EEAA…SNTA, ERQL…SKPA, EARQ…SVWG, and KEVGPRNSTNKNKNNASLSKSVGVSNRQN. Positions 846–898 are enriched in basic and acidic residues; sequence EEAAKWAREEEEAQRRLEENRLRMEEEAARLRHEEEERKRKELELQRQKDLMR. Residues 899–924 are compositionally biased toward low complexity; sequence QRQQQQEALRRLQQQQQQQQLAQMKL. Residues 925–937 show a composition bias toward polar residues; it reads PSSSTWGQQSNTA. Residues 958 to 973 are compositionally biased toward basic and acidic residues; that stretch reads ERQLREEQRRQQRELM. A compositionally biased stretch (low complexity) spans 977–986; that stretch reads QQQQQQQQQQ. At Ser995 the chain carries Phosphoserine. Residues 1015–1031 are compositionally biased toward low complexity; it reads MQKQQQQQQQQQQQHQQ. Polar residues predominate over residues 1032 to 1053; that stretch reads SNRARNSTHSNLHTSLGNSVWG. The segment covering 1096 to 1110 has biased composition (low complexity); that stretch reads NSTNKNKNNASLSKS. Residue Lys1129 forms a Glycyl lysine isopeptide (Lys-Gly) (interchain with G-Cter in SUMO2) linkage. Disordered regions lie at residues 1202–1223 and 1239–1263; these read AKQKVNQQRQQQQQQQQQQDSV and QSNNQQSNFEAVQSGKKKKKQKMVR. Residues 1208-1220 show a composition bias toward low complexity; the sequence is QQRQQQQQQQQQQ. Ser1276 carries the phosphoserine modification.

It belongs to the GIGYF family. As to quaternary structure, component of the 4EHP-GYF2 complex, at least composed of EIF4E2, GIGYF2 and ZNF598. Interacts (via the 4EHP-binding motif) with EIF4E2; the interaction is direct. Interacts with ZFP36/TTP (via P-P-P-P-G repeats); the interaction is direct. Interacts with GRB10. Interacts (via DDX6 motif) with DDX6 (via RecA-like domain 2). In terms of tissue distribution, expressed in heart, liver, kidney and brain as well as in testis.

Functionally, key component of the 4EHP-GYF2 complex, a multiprotein complex that acts as a repressor of translation initiation. In the 4EHP-GYF2 complex, acts as a factor that bridges EIF4E2 to ZFP36/TTP, linking translation repression with mRNA decay. Also recruits and bridges the association of the 4EHP complex with the decapping effector protein DDX6, which is required for the ZFP36/TTP-mediated down-regulation of AU-rich mRNA. May act cooperatively with GRB10 to regulate tyrosine kinase receptor signaling, including IGF1 and insulin receptors. In association with EIF4E2, assists ribosome-associated quality control (RQC) by sequestering the mRNA cap, blocking ribosome initiation and decreasing the translational load on problematic messages. Part of a pathway that works in parallel to RQC-mediated degradation of the stalled nascent polypeptide. GIGYF2 and EIF4E2 work downstream and independently of ZNF598, which seems to work as a scaffold that can recruit them to faulty mRNA even if alternative recruitment mechanisms may exist. The polypeptide is GRB10-interacting GYF protein 2 (Mus musculus (Mouse)).